Consider the following 1211-residue polypeptide: Sterol 3-beta-glucosyltransferase (1211 aa).

Over residues 1–10 (MSQLRPRDSS) the composition is skewed to basic and acidic residues. Residues 1–61 (MSQLRPRDSS…DETEAEDDID (61 aa)) are disordered. Residues 196-235 (EKLKTTFDLSDDDEFVNDYPCWLLHEVFLQGHIYITSRYL) form the GRAM 1 domain. The PH domain maps to 248–347 (VTMSGALSIR…WVTDLRKHIF (100 aa)). Disordered stretches follow at residues 422 to 452 (LTDS…KLSR) and 500 to 531 (VVPN…PSNW). A compositionally biased stretch (acidic residues) spans 423 to 432 (TDSDSSESDS). A compositionally biased stretch (basic and acidic residues) spans 507–525 (SELKQDHAGDAPKDSEEPS). The 67-residue stretch at 586–652 (SRFRKHFSLP…SDIENVYNLK (67 aa)) folds into the GRAM 2 domain. Positions 770, 771, 773, 1046, 1072, 1073, 1075, 1088, 1091, 1092, 1093, 1112, and 1113 each coordinate UDP-alpha-D-glucose.

This sequence belongs to the glycosyltransferase 28 family.

It is found in the cytoplasm. Its subcellular location is the preautophagosomal structure membrane. It catalyses the reaction a sterol + UDP-alpha-D-glucose = a sterol 3-beta-D-glucoside + UDP + H(+). The catalysed reaction is ergosterol + UDP-alpha-D-glucose = ergosteryl 3-beta-D-glucoside + UDP + H(+). Its function is as follows. Sterol glycosyltransferase responsible for the glycosylation of ergosterol to form ergosterol-glucoside. Shows also activity in vitro on other sterols such as cholesterol, beta-sitosterol, stigmasterol and tomatidine. Probable sterol 3-beta-glucosyltransferase that mediates autophagic degradation of peroxisomes (pexophagy). The protein is Sterol 3-beta-glucosyltransferase of Komagataella phaffii (strain GS115 / ATCC 20864) (Yeast).